A 979-amino-acid polypeptide reads, in one-letter code: Pimaradiene synthase pbcA (979 aa).

The short motif at 34–39 (VYDTAW) is the VYDTAW motif element. Positions 328 to 331 (DADD) match the DXDD B-type cyclization motif motif. The Mg(2+) site is built by D665, E669, N865, D866, S869, and D873. Positions 665–669 (DEFME) match the DEXXE A-type cyclization motif motif.

The protein belongs to the terpene synthase family. Mg(2+) is required as a cofactor.

It carries out the reaction (2E,6E,10E)-geranylgeranyl diphosphate = ent-copalyl diphosphate. It catalyses the reaction ent-copalyl diphosphate = ent-pimara-8(14),15-diene + diphosphate. It participates in secondary metabolite biosynthesis; terpenoid biosynthesis. Its function is as follows. Bifunctional terpene synthase; part of the gene cluster that mediates the biosynthesis of the diterpene ent-pimara-8(14),15-diene (PD). Within the cluster, the HMG-CoA reductase AN1593 functions in the mevalonate pathway, which produces isoprenoid precursors. The geranylgeranyl pyrophosphate (GGPP) synthase AN1592 is needed in the formation of GGPP, the precursor for diterpenes. Lastly, the pimaradiene synthase pbcA performs the 2 cyclization steps that convert GGPP to ent-pimara-8(14),15-diene with ent-copalyl diphosphate as an intermediate. The putative roles of the remaining cluster enzymes in ent-pimara-8(14),15-diene biosynthesis is unclear. The cytochrome P450 monooxygenase AN1598, the glutathione S-transferase AN1595, the oxidoreductases AN1596 and AN1597 probably function as decorative enzymes. It is possible that in biological conditions the compound is oxidized to ent-pimara-8(14),15-dien-19-oic acid, which is a bioactive diterpene compound predominant in many plant extracts. The sequence is that of Pimaradiene synthase pbcA from Emericella nidulans (strain FGSC A4 / ATCC 38163 / CBS 112.46 / NRRL 194 / M139) (Aspergillus nidulans).